The following is a 497-amino-acid chain: MALLNRDDWYDIARDVDWTLSYVDRAVAFPEEWKGEKDICGTAWDDWDEPFRVSFREYVMVQRDKEASVGAIREAMVRAKAYEKLDDGHKATSHLHMGTITMVEHMAVTMQSRFVRFAPSARWRSLGAFGMLDETRHTQLDLRFSHDLLNDSPSFDWSQRAFHTDEWAVLATRNLFDDIMLNADCVEAALATSLTLEHGFTNIQFVALASDAMEAGDVNFSNLLSSIQTDEARHAQLGFPTLDVMMKHDPKRAQQILDVAFWRSYRIFQAVTGVSMDYYTPVAKRQMSFKEFMLEWIVKHHERILRDYGLQKPWYWDTFEKTLDHGHHALHIGTWFWRPTLFWDPNGGVSREERRWLNQKYPNWEESWGVLWDEIISNINAGNIEKTLPETLPMLCNVTNLPIGSHWDRFHLKPEQLVYKGRLYTFDSDVSKWIFELDPERYAGHTNVVDRFIGGQIQPMTIEGVLNWMGLTPEVMGKDVFNYRWAGDYAENRIAAE.

Fe cation-binding residues include glutamate 104, glutamate 134, histidine 137, glutamate 197, glutamate 231, and histidine 234.

It belongs to the TmoA/XamoA family. The alkene monooxygenase multicomponent enzyme system is composed of an electron transfer component and a monooxygenase component interacting with the effector protein XamoD. The electron transfer component is composed of a ferredoxin reductase (XamoF) and a ferredoxin (XamoC), and the monooxygenase component is formed by a heterohexamer (dimer of heterotrimers) of two alpha subunits (XamoA), two beta subunits (XamoE) and two gamma subunits (XamoB). The cofactor is Fe(2+).

The protein resides in the cytoplasm. The enzyme catalyses propene + NADH + O2 + H(+) = 1,2-epoxypropane + NAD(+) + H2O. Its activity is regulated as follows. Inhibited by propyne. In terms of biological role, component of the alkene monooxygenase multicomponent enzyme system which catalyzes the O2- and NADH-dependent epoxidation of short chain (C2 to C6) alkenes to their corresponding epoxides. Also able to catalyze the oxidation of a number of chlorinated alkenes, including trichloroethylene, cis- and trans-1,2-dichloroethylene, vinyl chloride, 1-chloropropylene, 1,3-dichloropropylene and 2,3-dichloropropylene. In Xanthobacter autotrophicus (strain ATCC BAA-1158 / Py2), this protein is Alkene monooxygenase system, oxygenase component subunit alpha.